A 948-amino-acid polypeptide reads, in one-letter code: 3-hydroxy-3-methylglutaryl-coenzyme A reductase (948 aa).

6 consecutive transmembrane segments (helical) span residues 9 to 25, 55 to 71, 96 to 112, 124 to 140, 207 to 223, and 286 to 302; these read LLFF…VLLI, VIIF…VLTC, LILF…VLFV, TSVF…FIVL, IIYI…FMRI, and CWST…ILHL. A glycan (N-linked (GlcNAc...) asparagine) is linked at asparagine 316. A helical membrane pass occupies residues 347–363; the sequence is VINANLVVYLFLGLFLF. The segment at 364-466 is linker; it reads KRIRLNKPIN…MLTEKIKQGL (103 aa). Asparagine 430 carries an N-linked (GlcNAc...) asparagine glycan. The tract at residues 467 to 948 is catalytic; it reads GHELSDTEIL…VNPEISHYTM (482 aa). Catalysis depends on charge relay system residues glutamate 567, lysine 699, and aspartate 777. The active-site Proton donor is histidine 869. The N-linked (GlcNAc...) asparagine glycan is linked to asparagine 895.

It belongs to the HMG-CoA reductase family.

Its subcellular location is the endoplasmic reticulum membrane. It is found in the peroxisome membrane. The enzyme catalyses (R)-mevalonate + 2 NADP(+) + CoA = (3S)-3-hydroxy-3-methylglutaryl-CoA + 2 NADPH + 2 H(+). Its pathway is metabolic intermediate biosynthesis; (R)-mevalonate biosynthesis; (R)-mevalonate from acetyl-CoA: step 3/3. Its function is as follows. This transmembrane glycoprotein is involved in the control of cholesterol and nonsterol isoprenoid compounds biosynthesis. It is the rate-limiting enzyme of sterol biosynthesis. The chain is 3-hydroxy-3-methylglutaryl-coenzyme A reductase from Schistosoma mansoni (Blood fluke).